The following is a 601-amino-acid chain: MRVVRLLRLRAALTLLGEVPRRPASRGVPGSRRTQKGSGARWEKEKHEDGVKWRQLEHKGPYFAPPYEPLPDGVRFFYEGKPVRLSVAAEEVATFYGRMLGHEYTTKEVFRKNFFNDWRKEMAVEEREVIKSLDKCDFTEIHRYFVDKAAARKVLSREEKQKLKEEAEKLQREFGYCILDGHQEKIGNFKIEPPGLFRGRGDHPKMGMLKRRIMPEDVVINCSRDSKIPEPPAGHQWKEVRSDNTVTWLAAWTESVQNSIKYIMLNPCSKLKGETAWQKFETARRLRGFVDEIRSQYRADWKSREMKTRQRAVALYFIDKLALRAGNEKEDGEAADTVGCCSLRVEHVQLHPEADGCQHVVEFDFLGKDCIRYYNRVPVEKPVYKNLQLFMESKGPRDNLFDRLTTTSLNKHLQELMDGLTAKVFRTYNASITLQEQLRALTRAEDSIAAKILSYNRANRVVAILCNHQRATPSTFEKSMQNLQTKIQAKKEQVAEARAELRRARAEHKAQGDGKSRSVLEKKRRLLEKLQEQLAQLSVQATDKEENKQVALGTSKLNYLDPRISIAWCKRFRVPVEKIYSKTQRERFAWALAMAGEDFEF.

The transit peptide at 1-50 directs the protein to the mitochondrion; the sequence is MRVVRLLRLRAALTLLGEVPRRPASRGVPGSRRTQKGSGARWEKEKHEDG. The tract at residues 22 to 48 is disordered; that stretch reads RPASRGVPGSRRTQKGSGARWEKEKHE. Interaction with DNA stretches follow at residues 261–262, 324–329, and 421–423; these read KY, RAGNEK, and TAK. The region spanning 268 to 601 is the Topo IB-type catalytic domain; that stretch reads CSKLKGETAW…LAMAGEDFEF (334 aa). Y559 acts as the O-(3'-phospho-DNA)-tyrosine intermediate in catalysis.

This sequence belongs to the type IB topoisomerase family. Requires Ca(2+) as cofactor. Mg(2+) is required as a cofactor.

The protein resides in the mitochondrion. It catalyses the reaction ATP-independent breakage of single-stranded DNA, followed by passage and rejoining.. Releases the supercoiling and torsional tension of DNA introduced during duplication of mitochondrial DNA by transiently cleaving and rejoining one strand of the DNA duplex. Introduces a single-strand break via transesterification at a target site in duplex DNA. The scissile phosphodiester is attacked by the catalytic tyrosine of the enzyme, resulting in the formation of a DNA-(3'-phosphotyrosyl)-enzyme intermediate and the expulsion of a 5'-OH DNA strand. The free DNA strand then rotates around the intact phosphodiester bond on the opposing strand, thus removing DNA supercoils. Finally, in the religation step, the DNA 5'-OH attacks the covalent intermediate to expel the active-site tyrosine and restore the DNA phosphodiester backbone. The sequence is that of DNA topoisomerase I, mitochondrial (TOP1MT) from Pan troglodytes (Chimpanzee).